A 542-amino-acid chain; its full sequence is Chondroitin sulfate N-acetylgalactosaminyltransferase 2 (542 aa).

The Cytoplasmic segment spans residues 1-11 (MPRRGLILHTR). A helical; Signal-anchor for type II membrane protein membrane pass occupies residues 12–32 (THWLLLGLALLCSLVLFMYLL). At 33–542 (ECAPQTDGNA…AYRTNSEAVG (510 aa)) the chain is on the lumenal side. An N-linked (GlcNAc...) asparagine glycan is attached at Asn-41. A coiled-coil region spans residues 59–105 (ALLQEQEEHYQTRATSLKRQIAQLKQELQEMSEKMRSLQERRNVGAN). N-linked (GlcNAc...) asparagine glycosylation occurs at Asn-333. Positions 369 and 486 each coordinate a divalent metal cation.

Belongs to the chondroitin N-acetylgalactosaminyltransferase family. As to expression, ubiquitous.

The protein resides in the golgi apparatus. The protein localises to the golgi stack membrane. It carries out the reaction 3-O-(beta-D-GlcA-(1-&gt;3)-beta-D-Gal-(1-&gt;3)-beta-D-Gal-(1-&gt;4)-beta-D-Xyl)-L-seryl-[protein] + UDP-N-acetyl-alpha-D-galactosamine = 3-O-(beta-D-GalNAc-(1-&gt;4)-beta-D-GlcA-(1-&gt;3)-beta-D-Gal-(1-&gt;3)-beta-D-Gal-(1-&gt;4)-beta-D-Xyl)-L-seryl-[protein] + UDP + H(+). Functionally, transfers 1,4-N-acetylgalactosamine (GalNAc) from UDP-GalNAc to the non-reducing end of glucuronic acid (GlcUA). Required for addition of the first GalNAc to the core tetrasaccharide linker and for elongation of chondroitin chains. The sequence is that of Chondroitin sulfate N-acetylgalactosaminyltransferase 2 (CSGALNACT2) from Homo sapiens (Human).